The chain runs to 556 residues: MNQENASCPKKHFFGPASSRITVKGTIYPIEVGMRRVALTRSYECKGERFDAMPLYDTSGPFGDAEREHDVRKGLEPVRDRWGFDRGTVESVGGELSMTGRKPRVAKAGEAVTQMHFARKGIVTPEMEYVAIRENQALEAWIEKCGGKPVTPEMVRSEVARGRAIIPANINHPEIEPMIIGRNFRVKINANIGNSALGSSIDEEVEKAVWSCRWGADTVMDLSTGKNIHQTREWILRNSPVPIGTVPLYQALEKVGGKAEELSWEVYRDTLVEQAEQGVDYFTIHSGILAATLPDAEARQTGIVSRGGSIMARWCRAHKQENFLFTRFDDICDILRSYDVAISLGDALRPGSIGDANDAAQFGELKTLGELTLRAWKRDVQVMIEGPGHVPLHMIRENMEMQLKHCHEAPFYTLGPLVTDVAAGYDHVNSAIGGTLIASLGCSMLCYVTPKEHLGLPNRDDVREGVIVHRVAAHAADIAKGSATAWLRDELMSKARYAFAWEDQFSLALDPLKTRQIHAQNIAATGDTSATAKYCTMCGPDFCSMKRSQETTAAGL.

Substrate-binding positions include Asn191, Met220, Tyr249, His285, 305-307 (SRG), 346-349 (DALR), and Glu385. His389 provides a ligand contact to Zn(2+). Tyr412 contacts substrate. His453 lines the Zn(2+) pocket. Positions 535, 538, and 543 each coordinate [4Fe-4S] cluster.

The protein belongs to the ThiC family. Requires [4Fe-4S] cluster as cofactor.

It catalyses the reaction 5-amino-1-(5-phospho-beta-D-ribosyl)imidazole + S-adenosyl-L-methionine = 4-amino-2-methyl-5-(phosphooxymethyl)pyrimidine + CO + 5'-deoxyadenosine + formate + L-methionine + 3 H(+). It participates in cofactor biosynthesis; thiamine diphosphate biosynthesis. In terms of biological role, catalyzes the synthesis of the hydroxymethylpyrimidine phosphate (HMP-P) moiety of thiamine from aminoimidazole ribotide (AIR) in a radical S-adenosyl-L-methionine (SAM)-dependent reaction. The protein is Phosphomethylpyrimidine synthase of Chlorobaculum tepidum (strain ATCC 49652 / DSM 12025 / NBRC 103806 / TLS) (Chlorobium tepidum).